The sequence spans 494 residues: Tripartite motif-containing protein 5 (494 aa).

Residue alanine 2 is modified to N-acetylalanine. The RING-type zinc-finger motif lies at 15–59 (CPICLELLTQPLSLDCGHSFCQACLTANHKTSMPDEGERSCPVCR). At serine 86 the chain carries Phosphoserine. A B box-type zinc finger spans residues 91–133 (QKVDHCARHGEKLLLFCQEDRKVICWLCERSQEHRGHHTFLTE). Zn(2+) is bound by residues cysteine 96, histidine 99, cysteine 118, and histidine 124. The stretch at 132-241 (TEEVAQEYQV…LISDLEHRLQ (110 aa)) forms a coiled coil. Residues 186 to 199 (FEQLRHILDWVESN) are required for interaction with GABARAP and for autophagy. The B30.2/SPRY domain occupies 282-494 (LKVMLEVLRE…VPMTLCSPSS (213 aa)).

Belongs to the TRIM/RBCC family. Can form homodimers and homotrimers. In addition to lower-order dimerization, also exhibits a higher-order multimerization and both low- and high-order multimerizations are essential for its restriction activity. Interacts with BTBD1 and BTBD2. Interacts with PSMC4, PSMC5, PSMD7 and HSPA8/HSC70. Interacts (via B30.2/SPRY domain) with HSPA1A/B. Interacts with PSMC2, MAP3K7/TAK1, TAB2 and TAB3. Interacts with SQSTM1. Interacts with TRIM6 and TRIM34. Interacts with ULK1 (phosphorylated form), GABARAP, GABARAPL1, GABARAPL2, MAP1LC3A, MAP1LC3C and BECN1. Post-translationally, degraded in a proteasome-independent fashion in the absence of viral infection but in a proteasome-dependent fashion following exposure to restriction sensitive virus. Autoubiquitinated in a RING finger- and UBE2D2-dependent manner. Monoubiquitinated by TRIM21. Deubiquitinated by Yersinia YopJ. Ubiquitination may not lead to proteasomal degradation.

Its subcellular location is the cytoplasm. The protein localises to the nucleus. The catalysed reaction is S-ubiquitinyl-[E2 ubiquitin-conjugating enzyme]-L-cysteine + [acceptor protein]-L-lysine = [E2 ubiquitin-conjugating enzyme]-L-cysteine + N(6)-ubiquitinyl-[acceptor protein]-L-lysine.. Its pathway is protein modification; protein ubiquitination. In terms of biological role, capsid-specific restriction factor that prevents infection from non-host-adapted retroviruses. Blocks viral replication early in the life cycle, after viral entry but before reverse transcription. In addition to acting as a capsid-specific restriction factor, also acts as a pattern recognition receptor that activates innate immune signaling in response to the retroviral capsid lattice. Binding to the viral capsid triggers its E3 ubiquitin ligase activity, and in concert with the heterodimeric ubiquitin conjugating enzyme complex UBE2V1-UBE2N (also known as UBC13-UEV1A complex) generates 'Lys-63'-linked polyubiquitin chains, which in turn are catalysts in the autophosphorylation of the MAP3K7/TAK1 complex (includes TAK1, TAB2, and TAB3). Activation of the MAP3K7/TAK1 complex by autophosphorylation results in the induction and expression of NF-kappa-B and MAPK-responsive inflammatory genes, thereby leading to an innate immune response in the infected cell. Plays a role in regulating autophagy through activation of autophagy regulator BECN1 by causing its dissociation from its inhibitors BCL2 and TAB2. The chain is Tripartite motif-containing protein 5 (TRIM5) from Symphalangus syndactylus (Siamang).